The primary structure comprises 572 residues: Urease subunit alpha (572 aa).

A Urease domain is found at 136–572 (GGIDTHIHWI…VPLAQRYFLF (437 aa)). 3 residues coordinate Ni(2+): His-141, His-143, and Lys-224. Lys-224 is modified (N6-carboxylysine). His-226 contributes to the substrate binding site. 2 residues coordinate Ni(2+): His-253 and His-279. Catalysis depends on His-327, which acts as the Proton donor. Asp-367 is a binding site for Ni(2+).

It belongs to the metallo-dependent hydrolases superfamily. Urease alpha subunit family. In terms of assembly, heterotrimer of UreA (gamma), UreB (beta) and UreC (alpha) subunits. Three heterotrimers associate to form the active enzyme. It depends on Ni cation as a cofactor. In terms of processing, carboxylation allows a single lysine to coordinate two nickel ions.

The protein localises to the cytoplasm. The enzyme catalyses urea + 2 H2O + H(+) = hydrogencarbonate + 2 NH4(+). It participates in nitrogen metabolism; urea degradation; CO(2) and NH(3) from urea (urease route): step 1/1. The protein is Urease subunit alpha of Actinobacillus pleuropneumoniae (Haemophilus pleuropneumoniae).